The primary structure comprises 327 residues: tRNA N6-adenosine threonylcarbamoyltransferase (327 aa).

Positions 109 and 113 each coordinate Fe cation. Substrate contacts are provided by residues 132 to 136, Asp165, Gly178, Asp182, and Asn268; that span reads MVSGG. Residue Asp296 coordinates Fe cation.

Belongs to the KAE1 / TsaD family. As to quaternary structure, forms a hexamer composed of two TsaB, TsaD and TsaE trimers. Requires Fe(2+) as cofactor.

It is found in the cytoplasm. The enzyme catalyses L-threonylcarbamoyladenylate + adenosine(37) in tRNA = N(6)-L-threonylcarbamoyladenosine(37) in tRNA + AMP + H(+). In terms of biological role, required for the formation of a threonylcarbamoyl group on adenosine at position 37 (t(6)A37) in tRNAs that read codons beginning with adenine. Is involved in the transfer of the threonylcarbamoyl moiety of threonylcarbamoyl-AMP (TC-AMP) to the N6 group of A37, together with TsaE and TsaB. TsaD likely plays a direct catalytic role in this reaction. In Thermotoga maritima (strain ATCC 43589 / DSM 3109 / JCM 10099 / NBRC 100826 / MSB8), this protein is tRNA N6-adenosine threonylcarbamoyltransferase.